A 282-amino-acid chain; its full sequence is Stress response regulator protein 1 (282 aa).

Composition is skewed to low complexity over residues Asn-12–Thr-30 and Asn-45–Asn-58. Disordered stretches follow at residues Asn-12–Val-31, Asp-43–Asp-84, and Leu-112–Val-139. The span at Ser-66–Tyr-77 shows a compositional bias: polar residues. Low complexity predominate over residues Ser-125–Val-139. The 119-residue stretch at Ser-155–Asp-273 folds into the Response regulatory domain. Asp-206 bears the 4-aspartylphosphate mark.

Its function is as follows. Required for stress adaptation, morphogenesis and virulence. This chain is Stress response regulator protein 1 (SRR1), found in Candida albicans (strain SC5314 / ATCC MYA-2876) (Yeast).